A 613-amino-acid polypeptide reads, in one-letter code: Acetylcholinesterase (613 aa).

A signal peptide spans 1 to 30; that stretch reads MRPPWCPLHTPSLTPPLLLLLFLIGGGAEA. Asn-91 is a glycosylation site (N-linked (GlcNAc...) asparagine). A disulfide bond links Cys-99 and Cys-126. Ser-233 functions as the Acyl-ester intermediate in the catalytic mechanism. An intrachain disulfide couples Cys-287 to Cys-302. An N-linked (GlcNAc...) asparagine glycan is attached at Asn-295. Glu-364 serves as the catalytic Charge relay system. Asn-380 is a glycosylation site (N-linked (GlcNAc...) asparagine). Cys-439 and Cys-559 are disulfide-bonded. His-477 serves as the catalytic Charge relay system. Residue Asn-494 is glycosylated (N-linked (GlcNAc...) asparagine).

It belongs to the type-B carboxylesterase/lipase family. As to quaternary structure, interacts with PRIMA1. The interaction with PRIMA1 is required to anchor it to the basal lamina of cells and organize into tetramers. Isoform H generates GPI-anchored dimers; disulfide linked. Isoform T generates multiple structures, ranging from monomers and dimers to collagen-tailed and hydrophobic-tailed forms, in which catalytic tetramers are associated with anchoring proteins that attach them to the basal lamina or to cell membranes. In the collagen-tailed forms, isoform T subunits are associated with a specific collagen, COLQ, which triggers the formation of isoform T tetramers, from monomers and dimers.

It is found in the synapse. It localises to the secreted. Its subcellular location is the cell membrane. It catalyses the reaction acetylcholine + H2O = choline + acetate + H(+). Terminates signal transduction at the neuromuscular junction by rapid hydrolysis of the acetylcholine released into the synaptic cleft. This Bos taurus (Bovine) protein is Acetylcholinesterase (ACHE).